The sequence spans 950 residues: Protocadherin alpha-8 (950 aa).

A signal peptide spans 1–29; sequence MVYHWRGDLGSWRLLLLLLLLAAWKVGSG. Cadherin domains follow at residues 30-133, 157-242, 243-350, 351-455, 456-565, and 581-678; these read QLHY…PPVF, ASDA…APNF, EQSE…VPEI, ALTS…APAF, AQPE…APAL, and VPRS…APKA. Residues 30–697 lie on the Extracellular side of the membrane; it reads QLHYSVPEEA…GPEAALVDVN (668 aa). Residues asparagine 257 and asparagine 265 are each glycosylated (N-linked (GlcNAc...) asparagine). N-linked (GlcNAc...) asparagine glycosylation occurs at asparagine 548. The helical transmembrane segment at 698–718 threads the bilayer; that stretch reads VYLIIAICAVSSLLVLTLLLY. The Cytoplasmic segment spans residues 719-950; sequence TALRCSALPT…GNSTTDNSDQ (232 aa). PXXP repeat units follow at residues 774–777, 799–802, 832–835, 873–876, and 891–894; these read PCLP, PRQP, PGGP, PGNP, and PGSP. The interval 774 to 894 is 5 X 4 AA repeats of P-X-X-P; the sequence is PCLPPDLGSV…PDKFIIPGSP (121 aa). The segment at 831–950 is disordered; the sequence is GPGGPDQQWP…GNSTTDNSDQ (120 aa). Over residues 909–923 the composition is skewed to basic and acidic residues; the sequence is DKSDFITFGKKEETK.

It localises to the cell membrane. Its function is as follows. Potential calcium-dependent cell-adhesion protein. May be involved in the establishment and maintenance of specific neuronal connections in the brain. The sequence is that of Protocadherin alpha-8 (PCDHA8) from Pan troglodytes (Chimpanzee).